Here is a 4022-residue protein sequence, read N- to C-terminus: Intermembrane lipid transfer protein VPS13B (4022 aa).

Residues 2–102 form the Chorein N-terminal domain; it reads LESYVTPILM…KDGIQDDHES (101 aa). Residues 100-134 are disordered; it reads HESCGSNSTNRSTAESTKSSIKPRRMQQAAPTDPD. A compositionally biased stretch (polar residues) spans 103–119; that stretch reads CGSNSTNRSTAESTKSS. Phosphoserine is present on residues Ser-414, Ser-999, Ser-1002, and Ser-1033. Residues 1247 to 1314 form a disordered region; that stretch reads NLSPTSPETM…SVTLEQTTSN (68 aa). 2 stretches are compositionally biased toward polar residues: residues 1264–1292 and 1302–1314; these read PVRS…TEGD and FSDS…TTSN. A Phosphoserine modification is found at Ser-1815. A compositionally biased stretch (basic and acidic residues) spans 1860–1872; the sequence is KSQEQKNNEKTDK. The segment at 1860-1880 is disordered; it reads KSQEQKNNEKTDKSSLNLPEV. Residues 2631–2716 enclose the SHR-BD domain; the sequence is HFVICNDTQE…RTASLIIKVQ (86 aa). The interval 3908-4022 is localizes the protein to the Golgi apparatus; it reads AFPVTEIDCA…KNKALRKGFP (115 aa).

Belongs to the VPS13 family. Interacts with STX6. Interacts with STX12. Interacts with RAB6A isoform 1 (GTP-bound) and isoform 2 (GTP-bound). Interacts with RAB6B (GTP-bound). As to expression, widely expressed. There is apparent differential expression of different transcripts. In fetal brain, lung, liver, and kidney, two transcripts of 2 and 5 kb are identified. These transcripts are also seen in all adult tissues analyzed. A larger transcript (12-14 kb) is expressed in prostate, testis, ovary, and colon in the adult. Expression is very low in adult brain tissue. Expressed in peripheral blood lymphocytes. Isoform 1 and isoform 2 are expressed in brain and retina. Isoform 2 is expressed ubiquitously.

The protein resides in the recycling endosome membrane. The protein localises to the cytoplasmic vesicle. Its subcellular location is the secretory vesicle. It is found in the acrosome membrane. It localises to the golgi apparatus. The protein resides in the cis-Golgi network membrane. The protein localises to the endoplasmic reticulum-Golgi intermediate compartment membrane. Its subcellular location is the trans-Golgi network membrane. It is found in the early endosome membrane. It localises to the lysosome membrane. Functionally, mediates the transfer of lipids between membranes at organelle contact sites. Binds phosphatidylinositol 3-phosphate. Functions as a tethering factor in the slow endocytic recycling pathway, to assist traffic between early and recycling endosomes. Involved in the transport of proacrosomal vesicles to the nuclear dense lamina (NDL) during spermatid development. Plays a role in the assembly of the Golgi apparatus, possibly by mediating trafficking to the Golgi membrane. Plays a role in the development of the nervous system, and may be required for neuron projection development. May also play a role during adipose tissue development. Required for maintenance of the ocular lens. The chain is Intermembrane lipid transfer protein VPS13B (VPS13B) from Homo sapiens (Human).